Reading from the N-terminus, the 139-residue chain is D-ribose pyranase (139 aa).

H20 acts as the Proton donor in catalysis. Substrate-binding positions include D28, H106, and 128-130 (YAN).

The protein belongs to the RbsD / FucU family. RbsD subfamily. Homodecamer.

The protein localises to the cytoplasm. It carries out the reaction beta-D-ribopyranose = beta-D-ribofuranose. The protein operates within carbohydrate metabolism; D-ribose degradation; D-ribose 5-phosphate from beta-D-ribopyranose: step 1/2. Functionally, catalyzes the interconversion of beta-pyran and beta-furan forms of D-ribose. The chain is D-ribose pyranase from Escherichia coli O127:H6 (strain E2348/69 / EPEC).